A 221-amino-acid polypeptide reads, in one-letter code: Phosphatidylethanolamine-binding protein homolog F40A3.3 (221 aa).

The protein belongs to the phosphatidylethanolamine-binding protein family.

This Caenorhabditis elegans protein is Phosphatidylethanolamine-binding protein homolog F40A3.3.